A 1481-amino-acid polypeptide reads, in one-letter code: Cystic fibrosis transmembrane conductance regulator (1481 aa).

The Cytoplasmic segment spans residues Met1–Phe77. A helical transmembrane segment spans residues Leu78–Gln98. The region spanning Phe81 to Leu365 is the ABC transmembrane type-1 1 domain. At Pro99–Tyr122 the chain is on the extracellular side. The chain crosses the membrane as a helical span at residues Leu123–Gln146. Topologically, residues His147–Leu195 are cytoplasmic. A helical transmembrane segment spans residues Ala196–Trp216. Topologically, residues Asp217–Ser222 are extracellular. A helical transmembrane segment spans residues Ala223–Met243. Topologically, residues Met244–Lys298 are cytoplasmic. Residues Ala299–Phe319 traverse the membrane as a helical segment. Residues Leu320–Thr339 are Extracellular-facing. The helical transmembrane segment at Ile340–Val358 threads the bilayer. Topologically, residues Gln359–Ser859 are cytoplasmic. ATP is bound by residues Trp401, Ser435, Gly459–Thr466, and Gln494. The 224-residue stretch at Asn424–Gly647 folds into the ABC transporter 1 domain. The S-palmitoyl cysteine moiety is linked to residue Cys525. Phosphoserine is present on Ser550. A disordered R region region spans residues Ser655–Glu832. Phosphoserine; by PKA occurs at positions 661 and 671. A Phosphoserine; by PKC modification is found at Ser687. Lys689 participates in a covalent cross-link: Glycyl lysine isopeptide (Lys-Gly) (interchain with G-Cter in ubiquitin). 2 positions are modified to phosphoserine; by PKA: Ser701 and Ser713. Thr718 is modified (phosphothreonine). Phosphoserine; by PKA is present on residues Ser738, Ser769, Ser796, and Ser814. The helical transmembrane segment at Leu860–Val880 threads the bilayer. An ABC transmembrane type-1 2 domain is found at Leu860–Ser1156. At Val881–Ile919 the chain is on the extracellular side. N-linked (GlcNAc...) asparagine glycans are attached at residues Asn895 and Asn901. Residues Tyr920–His940 form a discontinuously helical membrane-spanning segment. Topologically, residues Thr941–Thr991 are cytoplasmic. Residues Ile992–Leu1012 form a helical membrane-spanning segment. Residues Gln1013–Pro1014 lie on the Extracellular side of the membrane. Residues Tyr1015–Leu1035 form a helical membrane-spanning segment. Over His1036 to Thr1096 the chain is Cytoplasmic. A helical transmembrane segment spans residues Leu1097–Phe1117. The Extracellular portion of the chain corresponds to Ile1118 to Gly1131. Residues Ile1132–Ile1152 form a helical membrane-spanning segment. The Cytoplasmic segment spans residues Asp1153–Leu1481. Residues Met1211–Ser1444 enclose the ABC transporter 2 domain. ATP contacts are provided by residues Tyr1220 and Gly1245–Ser1252. The interaction with GORASP2 stretch occupies residues Arg1387 to Leu1481. A lipid anchor (S-palmitoyl cysteine) is attached at Cys1396. 2 positions are modified to phosphoserine: Ser1445 and Ser1457. Basic residues predominate over residues His1453–Arg1462. The tract at residues His1453–Leu1481 is disordered. Residues Glu1471–Leu1481 are compositionally biased toward acidic residues. Residues Thr1479 to Leu1481 carry the PDZ-binding motif.

This sequence belongs to the ABC transporter superfamily. ABCC family. CFTR transporter (TC 3.A.1.202) subfamily. In terms of assembly, monomer; does not require oligomerization for channel activity. May form oligomers in the membrane. Interacts with SLC26A3, SLC26A6 and NHERF1. Interacts with SHANK2. Interacts with MYO6. Interacts (via C-terminus) with GOPC (via PDZ domain); this promotes CFTR internalization and thereby decreases channel activity. Interacts with SLC4A7 through NHERF1. Found in a complex with MYO5B and RAB11A. Interacts with ANO1. Interacts with SLC26A8. Interacts with AHCYL1; the interaction increases CFTR activity. Interacts with CSE1L. The core-glycosylated form interacts with GORASP2 (via PDZ GRASP-type 1 domain) in respone to ER stress. Interacts with MARCHF2; the interaction leads to CFTR ubiqtuitination and degradation. Interacts with ADGRG2. In terms of processing, N-glycosylated. Phosphorylated; cAMP treatment promotes phosphorylation and activates the channel. Dephosphorylation decreases the ATPase activity (in vitro). Phosphorylation at PKA sites activates the channel. Phosphorylation at PKC sites enhances the response to phosphorylation by PKA. Phosphorylated by AMPK; this inhibits channel activity. Post-translationally, ubiquitinated, leading to its degradation in the lysosome. Deubiquitination by USP10 in early endosomes enhances its endocytic recycling to the cell membrane. Ubiquitinated by RNF185 during ER stress. Ubiquitinated by MARCHF2.

It is found in the apical cell membrane. The protein localises to the early endosome membrane. Its subcellular location is the cell membrane. The protein resides in the recycling endosome membrane. It localises to the endoplasmic reticulum membrane. It is found in the nucleus. It carries out the reaction ATP + H2O + closed Cl(-) channel = ADP + phosphate + open Cl(-) channel.. The catalysed reaction is chloride(in) = chloride(out). It catalyses the reaction hydrogencarbonate(in) = hydrogencarbonate(out). The enzyme catalyses ATP + H2O = ADP + phosphate + H(+). Epithelial ion channel that plays an important role in the regulation of epithelial ion and water transport and fluid homeostasis. Mediates the transport of chloride ions across the cell membrane. Possesses an intrinsic ATPase activity and utilizes ATP to gate its channel; the passive flow of anions through the channel is gated by cycles of ATP binding and hydrolysis by the ATP-binding domains. The ion channel is also permeable to HCO(3)(-); selectivity depends on the extracellular chloride concentration. Exerts its function also by modulating the activity of other ion channels and transporters. Contributes to the regulation of the pH and the ion content of the epithelial fluid layer. Modulates the activity of the epithelial sodium channel (ENaC) complex, in part by regulating the cell surface expression of the ENaC complex. May regulate bicarbonate secretion and salvage in epithelial cells by regulating the transporter SLC4A7. Can inhibit the chloride channel activity of ANO1. Plays a role in the chloride and bicarbonate homeostasis during sperm epididymal maturation and capacitation. This is Cystic fibrosis transmembrane conductance regulator from Cavia porcellus (Guinea pig).